A 1209-amino-acid polypeptide reads, in one-letter code: MIPPKPRESQWTDEQWQAIYATGQHTLVAAAAGSGKTAVLVERIIQKILHKERPIDVDRLLVVTFTNAAAAEMRQRIGEALERALEKEPHSLHLRRQLSLLQKASISTIHSFCLDVIRKYYYVIGIDPVFRIADEGEMALLKEEVLETLFEQYYAENDEPFLTVVDRYTSDRTDADLQTLILRLYEFSRSHPNPSGWLQQIVHMYDVEEGARIDDLPYAHYLFQAVDLALEAAEYRLAQALQKTKEPGGPDYLYDTLASDEQVIAKLKEARHESWQQLHEAMKNVSFATAKRKPKDGAYDEQLVEDVKKLRDQVKKEISSITEELFSFQPVTYVRHLHEMKPIVTTIVQMVQRFAHLLQAKKDEKGIVDFSDLEHYCLRILRAPSLEHELKPSEAALYYRAQFAEVLVDEYQDTNMVQESILRLVSNDDEATGNMFMVGDVKQSIYGFRLAEPSLFLQKYNRFTKDGDGGLRIDLAKNFRSRKEILDGTNFIFRQLMTETVGDMRYDDDAALRFGAQDYPDKQIPVECVWINEAKEESDEEEQEDVTAVQLEARWIAKKIKQLLAEPFFVYDRRLKGERRLMYRDIVILCRSMSSASAMLEEFRKQNVPVYAELSSGYFSATEVSIMLSLLKVIDNPYQDIPLAAVLRSPIVGLDEEALARIRLAKKDGAFYEALCAFVQEPHDDELHEKMKRWLASLSEWRTAARQKPLADLIWQLYRETNFYDYVGGMPGGKQRQANLRALYDRAKQYEQTSFRGIFRFLRFIERLKEREDDFGAARSLTEQEDVVRMMTIHKSKGLEFPVVFLAGAAKSFNMQDLRSDYVLDKDFGLGMRFVHPTWRASYPTVAQLAIKKKMKWQLLAEEMRILYVALTRAKEKLYIVCTAKDMEAKKKKWQEVAYTSTWELPAYVIEKAKSYADWIGYALARHQQGICSSATVLHDPSLWDIHIVPAHELEQEDAQANEHRDIVEAIQQLQPVAIKSEYEEEVNRRLFWTYTHAPATVLRAKQSVSELKRQRDIYGGHAEQPFRKELVERPRFLQAKMMTPAERGTMMHLVMQHVDVTKEVTVDAVREQIARMVNGEWLTEEQATVIDVESIVAFFNTPIGKRMQRATRLEREVPFYLAHEMEGETVVVQGVIDCVFEDEHGLVLIDYKTDRVSWMNDPKQQLKRRYKGQLALYREAIEAIWKREVTETYVYAFDGALLVPMEVD.

One can recognise a UvrD-like helicase ATP-binding domain in the interval 9–482; it reads SQWTDEQWQA…IDLAKNFRSR (474 aa). 30-37 is a binding site for ATP; it reads AAAGSGKT. The UvrD-like helicase C-terminal domain maps to 510 to 798; sequence AALRFGAQDY…RMMTIHKSKG (289 aa).

This sequence belongs to the helicase family. AddA subfamily. Heterodimer of AddA and AddB/RexB. The cofactor is Mg(2+).

The catalysed reaction is Couples ATP hydrolysis with the unwinding of duplex DNA by translocating in the 3'-5' direction.. The enzyme catalyses ATP + H2O = ADP + phosphate + H(+). The heterodimer acts as both an ATP-dependent DNA helicase and an ATP-dependent, dual-direction single-stranded exonuclease. Recognizes the chi site generating a DNA molecule suitable for the initiation of homologous recombination. The AddA nuclease domain is required for chi fragment generation; this subunit has the helicase and 3' -&gt; 5' nuclease activities. The chain is ATP-dependent helicase/nuclease subunit A from Anoxybacillus flavithermus (strain DSM 21510 / WK1).